The primary structure comprises 619 residues: Dihydroxy-acid dehydratase 1 (619 aa).

Aspartate 81 contributes to the Mg(2+) binding site. Cysteine 122 is a binding site for [2Fe-2S] cluster. 2 residues coordinate Mg(2+): aspartate 123 and lysine 124. The residue at position 124 (lysine 124) is an N6-carboxylysine. [2Fe-2S] cluster is bound at residue cysteine 201. Glutamate 496 provides a ligand contact to Mg(2+). Catalysis depends on serine 522, which acts as the Proton acceptor.

Belongs to the IlvD/Edd family. As to quaternary structure, homodimer. Requires [2Fe-2S] cluster as cofactor. The cofactor is Mg(2+).

It catalyses the reaction (2R)-2,3-dihydroxy-3-methylbutanoate = 3-methyl-2-oxobutanoate + H2O. The enzyme catalyses (2R,3R)-2,3-dihydroxy-3-methylpentanoate = (S)-3-methyl-2-oxopentanoate + H2O. Its pathway is amino-acid biosynthesis; L-isoleucine biosynthesis; L-isoleucine from 2-oxobutanoate: step 3/4. The protein operates within amino-acid biosynthesis; L-valine biosynthesis; L-valine from pyruvate: step 3/4. Functions in the biosynthesis of branched-chain amino acids. Catalyzes the dehydration of (2R,3R)-2,3-dihydroxy-3-methylpentanoate (2,3-dihydroxy-3-methylvalerate) into 2-oxo-3-methylpentanoate (2-oxo-3-methylvalerate) and of (2R)-2,3-dihydroxy-3-methylbutanoate (2,3-dihydroxyisovalerate) into 2-oxo-3-methylbutanoate (2-oxoisovalerate), the penultimate precursor to L-isoleucine and L-valine, respectively. The chain is Dihydroxy-acid dehydratase 1 from Burkholderia lata (strain ATCC 17760 / DSM 23089 / LMG 22485 / NCIMB 9086 / R18194 / 383).